Consider the following 300-residue polypeptide: Transcription initiation factor IIB (300 aa).

A TFIIB-type zinc finger spans residues 2–34 (NKQKVCPACESAELIYDPERGEIVCAKCGYVIE). Residues cysteine 7, cysteine 10, cysteine 26, and cysteine 29 each contribute to the Zn(2+) site. Tandem repeats lie at residues 114-197 (SELD…ARNL) and 210-291 (DYVN…ELVE).

The protein belongs to the TFIIB family.

Stabilizes TBP binding to an archaeal box-A promoter. Also responsible for recruiting RNA polymerase II to the pre-initiation complex (DNA-TBP-TFIIB). In Pyrococcus furiosus (strain ATCC 43587 / DSM 3638 / JCM 8422 / Vc1), this protein is Transcription initiation factor IIB.